The primary structure comprises 81 residues: MKNSSLLFILIVVFVISSSENGIMIGEAKKCSNSWICEGDEKCKEKCMADYKGNGTCYYPSPPSKQHPEFFYPTCWCGFDC.

Positions 1–19 (MKNSSLLFILIVVFVISSS) are cleaved as a signal peptide. Intrachain disulfides connect cysteine 31–cysteine 81, cysteine 37–cysteine 57, cysteine 43–cysteine 75, and cysteine 47–cysteine 77.

The protein belongs to the DEFL family.

It localises to the secreted. This is Putative defensin-like protein 188 (LCR41) from Arabidopsis thaliana (Mouse-ear cress).